Reading from the N-terminus, the 333-residue chain is uncharacterized protein (333 aa).

The protein to bacterial alkanal monooxygenase alpha and beta chains.

This is an uncharacterized protein from Bacillus subtilis (strain 168).